The chain runs to 301 residues: Acetyl-coenzyme A carboxylase carboxyl transferase subunit beta (301 aa).

Residues 25–294 (LWIKDPSTGE…NSDAPAPQKP (270 aa)) enclose the CoA carboxyltransferase N-terminal domain.

The protein belongs to the AccD/PCCB family. Acetyl-CoA carboxylase is a heterohexamer composed of biotin carboxyl carrier protein (AccB), biotin carboxylase (AccC) and two subunits each of ACCase subunit alpha (AccA) and ACCase subunit beta (AccD).

The protein resides in the cytoplasm. It carries out the reaction N(6)-carboxybiotinyl-L-lysyl-[protein] + acetyl-CoA = N(6)-biotinyl-L-lysyl-[protein] + malonyl-CoA. Its pathway is lipid metabolism; malonyl-CoA biosynthesis; malonyl-CoA from acetyl-CoA: step 1/1. Component of the acetyl coenzyme A carboxylase (ACC) complex. Biotin carboxylase (BC) catalyzes the carboxylation of biotin on its carrier protein (BCCP) and then the CO(2) group is transferred by the transcarboxylase to acetyl-CoA to form malonyl-CoA. The protein is Acetyl-coenzyme A carboxylase carboxyl transferase subunit beta of Brucella canis (strain ATCC 23365 / NCTC 10854 / RM-666).